Here is a 381-residue protein sequence, read N- to C-terminus: Succinyl-diaminopimelate desuccinylase (381 aa).

His70 lines the Zn(2+) pocket. Residue Asp72 is part of the active site. Asp103 lines the Zn(2+) pocket. Residue Glu136 is the Proton acceptor of the active site. Zn(2+)-binding residues include Glu137, Glu165, and His354.

Belongs to the peptidase M20A family. DapE subfamily. Homodimer. The cofactor is Zn(2+). Co(2+) is required as a cofactor.

The enzyme catalyses N-succinyl-(2S,6S)-2,6-diaminopimelate + H2O = (2S,6S)-2,6-diaminopimelate + succinate. The protein operates within amino-acid biosynthesis; L-lysine biosynthesis via DAP pathway; LL-2,6-diaminopimelate from (S)-tetrahydrodipicolinate (succinylase route): step 3/3. Its function is as follows. Catalyzes the hydrolysis of N-succinyl-L,L-diaminopimelic acid (SDAP), forming succinate and LL-2,6-diaminopimelate (DAP), an intermediate involved in the bacterial biosynthesis of lysine and meso-diaminopimelic acid, an essential component of bacterial cell walls. The chain is Succinyl-diaminopimelate desuccinylase from Roseobacter denitrificans (strain ATCC 33942 / OCh 114) (Erythrobacter sp. (strain OCh 114)).